The chain runs to 261 residues: Ribonuclease PH (261 aa).

Residues R88 and G126–R128 each bind phosphate. Residues P242–A261 form a disordered region. The span at K251–A261 shows a compositional bias: basic and acidic residues.

Belongs to the RNase PH family. As to quaternary structure, homohexameric ring arranged as a trimer of dimers.

The enzyme catalyses tRNA(n+1) + phosphate = tRNA(n) + a ribonucleoside 5'-diphosphate. Phosphorolytic 3'-5' exoribonuclease that plays an important role in tRNA 3'-end maturation. Removes nucleotide residues following the 3'-CCA terminus of tRNAs; can also add nucleotides to the ends of RNA molecules by using nucleoside diphosphates as substrates, but this may not be physiologically important. Probably plays a role in initiation of 16S rRNA degradation (leading to ribosome degradation) during starvation. The chain is Ribonuclease PH from Rhodococcus erythropolis (strain PR4 / NBRC 100887).